The chain runs to 431 residues: Selenocysteine lyase (431 aa).

Lys239 is modified (N6-(pyridoxal phosphate)lysine). Cys367 serves as the catalytic S-selanylcysteine intermediate.

This sequence belongs to the class-V pyridoxal-phosphate-dependent aminotransferase family. Homodimer. Pyridoxal 5'-phosphate is required as a cofactor.

It is found in the cytoplasm. Its subcellular location is the cytosol. The enzyme catalyses L-selenocysteine + AH2 = hydrogenselenide + L-alanine + A + H(+). In terms of biological role, catalyzes the decomposition of L-selenocysteine to L-alanine and elemental selenium. The sequence is that of Selenocysteine lyase (scly) from Xenopus tropicalis (Western clawed frog).